Here is a 65-residue protein sequence, read N- to C-terminus: Putative beta-neurotoxin RjAa7 (65 aa).

The region spanning 1–64 (KEGYPVGRDG…VWDSSTNKCG (64 aa)) is the LCN-type CS-alpha/beta domain. 4 disulfides stabilise this stretch: C11/C63, C15/C37, C22/C44, and C26/C46.

The protein belongs to the long (4 C-C) scorpion toxin superfamily. Sodium channel inhibitor family. Beta subfamily. As to expression, expressed by the venom gland.

The protein resides in the secreted. Beta toxins bind voltage-independently at site-4 of sodium channels (Nav) and shift the voltage of activation toward more negative potentials thereby affecting sodium channel activation and promoting spontaneous and repetitive firing. This Rhopalurus junceus (Caribbean blue scorpion) protein is Putative beta-neurotoxin RjAa7.